Here is a 344-residue protein sequence, read N- to C-terminus: Mitochondrial mRNA pseudouridine synthase RPUSD3 (344 aa).

The N-terminal 41 residues, 1 to 41 (MGGWRVLGQASGGWRRGLGIRATSTAAGFGTKARHQLQRRG), are a transit peptide targeting the mitochondrion. The tract at residues 29–59 (FGTKARHQLQRRGASKPSDPPGDQPFPGLLR) is disordered. The segment covering 32 to 42 (KARHQLQRRGA) has biased composition (basic residues). The residue at position 64 (S64) is a Phosphoserine.

It belongs to the pseudouridine synthase RluA family. As to quaternary structure, forms a regulatory protein-RNA complex, consisting of RCC1L, NGRN, RPUSD3, RPUSD4, TRUB2, FASTKD2 and 16S mt-rRNA.

It localises to the mitochondrion matrix. It carries out the reaction a uridine in mRNA = a pseudouridine in mRNA. Functionally, catalyzes uridine to pseudouridine isomerization (pseudouridylation) of specific mitochondrial mRNAs (mt-mRNAs), a post-transcriptional modification necessary for their translation. Acts at position 390 in COXI mt-mRNA and at position 697-699 in mitochondrial COXIII mt-mRNA. As a component of a functional protein-RNA module, consisting of RCC1L, NGRN, RPUSD3, RPUSD4, TRUB2, FASTKD2 and 16S mitochondrial ribosomal RNA (16S mt-rRNA), controls 16S mt-rRNA abundance and may play a role in mitochondrial ribosome biogenesis. This chain is Mitochondrial mRNA pseudouridine synthase RPUSD3 (RPUSD3), found in Bos taurus (Bovine).